The chain runs to 278 residues: MQKRAISSRFSEKAVSYEKYALVQKKMADHLSQMVTEITNENDVRSILEIGCGTGGLTRVIRSYFSAAHYEAVEIAQGMLEQAKNNLEQHGLICSFSQADAEEWVWEQQAKSKDLIVSGACFQWFARPAHTLRGLARILKPGAPLVFSTFGPDTFWELHDSFTNAHAILGEKGVRHGLEFLSARDWHEQLEQAGFTDIEISRKYERLTYPGVRDFLHAVKAVGASVSMEQGSGLGRRKLLAEMIRYYEQTYKRETGIPVTYEVIYVRAVSSRAVTFFK.

It belongs to the methyltransferase superfamily.

It carries out the reaction malonyl-[ACP] + S-adenosyl-L-methionine = malonyl-[ACP] methyl ester + S-adenosyl-L-homocysteine. It participates in cofactor biosynthesis; biotin biosynthesis. Converts the free carboxyl group of a malonyl-thioester to its methyl ester by transfer of a methyl group from S-adenosyl-L-methionine (SAM). It allows to synthesize pimeloyl-ACP via the fatty acid synthetic pathway. The protein is Malonyl-[acyl-carrier protein] O-methyltransferase of Brevibacillus brevis (strain 47 / JCM 6285 / NBRC 100599).